Consider the following 372-residue polypeptide: Chaperone protein DnaJ (372 aa).

The J domain occupies Asp-5–Gly-70. Residues Gly-134–Lys-211 form a CR-type zinc finger. Positions 147, 150, 163, 166, 185, 188, 199, and 202 each coordinate Zn(2+). CXXCXGXG motif repeat units lie at residues Cys-147–Gly-154, Cys-163–Gly-170, Cys-185–Gly-192, and Cys-199–Gly-206.

Belongs to the DnaJ family. As to quaternary structure, homodimer. Requires Zn(2+) as cofactor.

It is found in the cytoplasm. Functionally, participates actively in the response to hyperosmotic and heat shock by preventing the aggregation of stress-denatured proteins and by disaggregating proteins, also in an autonomous, DnaK-independent fashion. Unfolded proteins bind initially to DnaJ; upon interaction with the DnaJ-bound protein, DnaK hydrolyzes its bound ATP, resulting in the formation of a stable complex. GrpE releases ADP from DnaK; ATP binding to DnaK triggers the release of the substrate protein, thus completing the reaction cycle. Several rounds of ATP-dependent interactions between DnaJ, DnaK and GrpE are required for fully efficient folding. Also involved, together with DnaK and GrpE, in the DNA replication of plasmids through activation of initiation proteins. The polypeptide is Chaperone protein DnaJ (Aliarcobacter butzleri (strain RM4018) (Arcobacter butzleri)).